We begin with the raw amino-acid sequence, 662 residues long: DNA topoisomerase 4 subunit B (662 aa).

ATP is bound by residues tyrosine 20, asparagine 60, aspartate 87, 129–135 (GLHGVGV), and lysine 359. Residues 439–553 (TELFIVEGDS…DGHLYLAKPP (115 aa)) enclose the Toprim domain. The Mg(2+) site is built by glutamate 445, aspartate 518, and aspartate 520.

This sequence belongs to the type II topoisomerase family. ParE type 1 subfamily. As to quaternary structure, heterotetramer composed of ParC and ParE. Mg(2+) serves as cofactor. It depends on Mn(2+) as a cofactor. Ca(2+) is required as a cofactor.

The enzyme catalyses ATP-dependent breakage, passage and rejoining of double-stranded DNA.. In terms of biological role, topoisomerase IV is essential for chromosome segregation. It relaxes supercoiled DNA. Performs the decatenation events required during the replication of a circular DNA molecule. The polypeptide is DNA topoisomerase 4 subunit B (Rickettsia bellii (strain RML369-C)).